A 321-amino-acid chain; its full sequence is Queuosine 5'-phosphate N-glycosylase/hydrolase (321 aa).

Queuine contacts are provided by Phe227, Asp229, and Asp296. Asp229 functions as the Nucleophile or transition state stabilizer in the catalytic mechanism.

Belongs to the QNG1 protein family.

It catalyses the reaction queuosine 5'-phosphate + H2O = queuine + D-ribose 5-phosphate. Its function is as follows. Catalyzes the hydrolysis of queuosine 5'-phosphate, releasing the nucleobase queuine (q). Is required for salvage of queuine from exogenous queuosine (Q) that is imported and then converted to queuosine 5'-phosphate intracellularly. This chain is Queuosine 5'-phosphate N-glycosylase/hydrolase, found in Dictyostelium discoideum (Social amoeba).